The following is an 8886-amino-acid chain: MDHSFSGAPRFLTRPKAFVVSVGKDATLSCQIVGNPTPHVSWEKDRQPVEAGARFRLAQDGDVYRLTILDLALGDSGQYVCRARNAIGEAFAAVGLRVDSEGTCAEQAPHFLLRPTSIRVREGADATFRCRVGGSPQPAVSWSKDGRRLGPPDAPHVRVEEHGESSALRIRSARPRDGGTYEVRAENPLGSASAAAALVVDSDAEVAGPPGTSTATLLAHLQQRREAMRAEGIPPSPPGAGTRTCTVTEGKHARLSCFVTGEPKPETVWKKDGQLVTEGRRHVVYEDEQENFVLKILFCKQSDRGLYTCTASNLVGQTYSSVLVVVREPTVPFKKRLQDLEVREKESATFQCEVAQPATEAAWFKEETRLWASAKYDIEEEGTERRLTVRNVSADDDAVYICETTEGSRTVAELSVQGNLTRKLPRKTAVRTGDTAIFWVELAVPEGPVRWLRNQEEMVAGGRVAITAEGTCHTLTIFQCTLEDMGEVAFVSGGCRTTTQFCVSAPRRPPLYPPADPVVKAKTESSVTLSWSAPPHGDRPVTIDGYVLEKRKLGAYAWSRCHEAGWLATTEFTITGVAEEGDFQFRVSAINHFGQGPYLEFPGTMHLVPMLAVKTPLKAVEAVEGGEVTFSVDLTVASSGEWFLDGEALKASSIYVIRCDRTRHMLTIREVPARLHGAQLKFVANGIETSIQMVVRAALGLPSSKLPAAAAREVLAQLHEEAQLLAELSDQAAAVTWLKDGRELSLGPKYEMQVSAGRRALLVRDVAQDDAGLYECVSRGSRTAYQLLVQDITDGYRDWGPAGPQKHMCKCAGAKIARYLGSSCYRFLQYDKGVWHWLEAALDTRQGKGTSSCSLHEKPKLVFAKGQQAHSEVKAEAGNSATLSCEVTQAQTEVTWFKDGKKLSSSSKVRMEASGCSRRLVVQQAGKADAGEYSCEAGGQKLSFRLDVAEPKLVFAKGQQAHSEVKAEAGASATLSCEVAQAQTEVTWFKDGKKLSSSSKVRMEASGCSRRLVVQQAGKADAGEYSCEAGGQKLSFRLDVAEPKMVFAKEQQARSEVKAEAGASATLSCEVAQAQTEVTWFKDGKKLSSSSKVRMEASGCSRRLVVQQAGKADAGEYSCEAGGQKLSFRLDVTEPKLVFAKEQQARSEVKAEVGNSATLSCEVAQAQTEVTWFKDGKKLSSSSKVRMEASGCSRRLVVQQAGKADAGEYSCEAGGQKLSFRLDVAEPKLVFAKEQQARSEVKAEAGNSATLSCEVAQAQTEVTWFKDGKKLSSSSKVRMEASGCSRRLVVQQAGKADAGEYSCEAGGQKLSFHLDVTEPKLVFAKEQQAHSEVKAEAGASATLSCEVAQAQTEVTWFKDGKKLSSSSKVRMEASGCSRRLVVQQAGKADAGEYSCEAEGQKLSFRLDVAEPKLVFAKEQQARSEVKAEAGASATLSCEVAQAQTEVTWFKDGKKLSSSSKVRVEASGCSRRLVVQQAGKADAGEYSCEAGGQKLSFRLDVAEPKLVFAKEQQANSEVKAEAGASATLSCEVAQAQTEVTWFKDGKKLSSSSKVRVEASGCSRRLVVQQAGKADAGEYSCEAGGQKLSFRLDVAEPKLAFAKEQQAHSEVKAEAGASATLSCEVAQAQTEVTWFKDGKKLSSSSKVRVEASGCSRRLVVQQAGKADAGEYSCEAGGQKLSFRLDVAEPKLAFAKEQQAHSEVKAEAGASATLSCEVAQAQTEVTWFKDGKKLSSSSKVRVEASGCSRRLVVQQAGKADAGEYSCEAGGQKLSFRLDVAEPKLAFAKEQQAHSEVKAEAGASATLSCEVAQAQTEVTWFKDGKKLSSSSKVRVEASGCSRRLVVQQAGKADAGEYSCEAGGQKLFFRLDVAEPKLMFAKEQQAHSEVKAEAGASATLSCEVAQAQTEVTWFKDGKKLSSSSKVRVEASGCSRRLVVQQAGKADAGEYSCEAGGQKLSFRLDVAEPKLVFAKEQQAHSEVKAEAGASATLSCEVAQAQTEVTWFKDGKKLSSSSKVRVEASGCSRRLVVQQVGKADAGEYSCEARGQKLSFRLDVADTRLMFAKEQQARTEVKAEAGNSATLSCEVAQAQTEVTWFKDGKKLSSSSKVRVEASGCSRRLVVQQAGKADAGEYSCEAGGQKLSFRLDVAEAESQIPERPSRREPLVVKEHETIILTATIAAPSVAAVTWLKDGVEIRRSKRHEATSLGDTHTLTVRGAQVLDSAIYSCRVGKEGQDFPVQVEEVAAKFSKPLEPVEGELGGTVMLVCELSPEQAEVVWRCGNTQLRPGKRFQMTSEGPRRTLTVSGLREDDAEEYVCESRDDRTSARLTVKVPRVVKFTSGLSAMVAEEGQEATFQCVVSPSDAGVTWYKDGMQLQPSEKFVMVESGASRSLTILGLTLEDAGQVTVEAEGASSSAALRVREAPVLFKKKLEPQTVEERTSVTLEVELTRPWPEVKWTRNAAVLTPSENVEIRAEGARHCLVLRSVGFADRGFFGCETPDDKTQAKLNVEMRQVRLVRGLQEVEAKEQGTASMDVELSHAEVEGSWTRDGLRLQPGPKCHLAVQGPVHILTLSALQPQDSGLVAFRAEGVHTSARLIVTELPVSFTRVLQDVVATQKEKVTLECELSRPVDVRWLKDGVELRAGKAIGIVAQGTCRSLVIYRCETGDQGVYVCDALDAQTSASLRVQGRTYTLIFRRVLAEDAGEVKFVAENAESRAHLRVKELPVTLLRPLRDKIAMEKHRGVLECQVSRASAQVRWFKGGVELQSGPKYEVVSDGLYRKLVINDVQPEDEDTYTCDAGNVKTSAQFFVEEQSITIVRGLKDMTVMEPAPAWFECETSIPSVRPPKWLLGKTVLQAGGNVGLEQDGTVHRLTLHKTCSTMTGPVHFTIGKSRSSAQLVVSDIPVVLTRPLEPKAGRELQSVVLSCDFRPAPKAVQWYKDDTPLSPSEKFKMALEGQMAELRILRLTPADAGVYRCQAGSAQSSAEVTVEAREVTVIQPLQDAEAMEEGRVCFSCELSHKDEDIEWSLNGTPLYNDSFHEISHEGCLHTLVLKSVRQADTGTVCATSPKVSVSARLVVKGKPVVFLKALDDVSAEERGTLTLQCEVSDPEARVVWRKDGVELGPSDKYDFLHKAGARGLTVHDLSHEDAGLYTCQVGSKETQSKVSVHDLHVGITKRLKTVEVLEGESCSFECVLSHESPSDPAVWTVGGKTVGGSGHFHAVRQGRKYTLTVKDAALSDAGEVVFSVLGLTSKASLIIRERPVDITKPLEDQRTTLGEDVMLSCELSRAGTSVRWLKDGKAIRKSQKYDLLSEGTRAVLVVRKASLKDSGEYTCETEASKSTAKLCVEEKANRFTEELADLQVEEKGRAVFTCKTEHPASVVTWRKGLLELRASGKHVPSQEGLTLKLTINALERTDSDTYTCDIGQARTQARLLVHGQKVRVIEDLEDTAVQEGSSAKFCCRIAPADYGPVHWFLDKTPLHSNELNEITVQPGGYHVLTLRQLALKDSGTVYFEAGDQRTSAALRVTEKPSIFSRPLTDVTVTEGEDLTLVCETTTVDSSVRWTKDGKTLRPSARCQLSHEGCQAQLLITATTPQDGGRYKCEIGGASSSSIVRVHALPVRFRESLKDVEVPEGKAATLRCVLSSVAAPVEWRHGDDVLKSSNKYSLRQEGAVLELVIRDLQPQDSGQYSCSFGDQTTSATLTVKTSSAQFVGKLRNKEATEGTTVTLRCELTKEAPVEWKKGTETLRNGDKYSLKQDGAVCELQICSLLVADAGEYSCVCGQEKTSATLTVKALLVHFVRRLRSKEATEGDTTTLQCELSKAAPVEWRKGTETLRDGDRYSLKQDGAVCELQIRSLTIADAGEYLCTCGQEKTSATLTVRALPAKFKDSLKNEEATEGTTATLSCELSKAAPVTWKKGPKTLQSGDKYVLRQDGAVCGLQIHGLTMADAGEYSCVCGQEKTSATLTVRGLPAKFIEDLRSQEATEGATAILRCELSKAAPVEWRKGSETLKDGDRYTLRQDGAVCELQIRGLAVVDTGTYSSLPTKFTEGLRNEEATEGTMATLRCQMSKAAPVEWRKGSETLRDGDRYSLRQDGAMCELQIRGLTIEDSGEYTCVCGQEKTSATLSVKALPSRFIEDLRSQEATEGTMATLRCQMSKTAPVEWKKGSETLRDGGRYSLRQDGPVCELQICDLAVEDAGEYSCVCGQEKTSATLSIKALPPRFIEDLRSQEATEGTMATLRCQMSKAAPVEWRKGSETLGDGGRYSLRQNGAVCELQIHDLAVEDTGEYSCVCGQEKTSATLNVKALPPRFIEDLRSQEATEGTMATLRCQMSKAAPVEWRKGSETLRDGGRYSLRQDGAVCELQIHDLDVEDAGQYSCVCGQEKTSAVLTVDALPPKFTEGLKKEEATEGTMVTLRCQMSKEATVEWRKGAKTLSDGGRYSLRQDGAMCELQICGLAVEDAGEYSCVCGQEKTSATLSVKALPPRFIEDLRSQEATEGTMATLRCQMSKAAPVEWRKGSETLRDGDRYSLRQDGAVCELQIRDLAVEDAGEYLCVCGQEKTSATLSVKALPPRFIEDLRSQEATEGTMATLRCQMSKAAPVEWRKGSKTLRDGDRYSLRQDGAMCELQICDLAVEDTGDYSCVCGQEKTSATLSVKALPPRFIEDLRSQEAREGTVATLRCRMSKAAPVEWRKGSETLKDGDRYSLRQEGNLCELQIRDLAVEDTEEYSCVCGQEKTSATLSVKALPAKFIEDLRSQEAPESSTVTLRCKLSKKASVVWKKGSETLRNGARYSLRQDGAVCELEIRDLTVEDTGEYSCTCGQERTSATLSIMAPQVVFQQPLQNLQAEEGSMASLRCELSVPNAAMVWSKGGLELQGDTRREARQQGCVAELLLRDLRREDAGEYSCTCGSQTTSATLMVTAAPVRFLRELQAQDVDEGATARLRCELSREAVSVEWRKGSLQLFPCAKYQMVQEGTTAELLVHGVEQEDAGEYTCDAGHTQSIARLSVRAPKPKFKTDLQSTEQEAGGTARLCCQLSEAEPGTPVQWLKEGVELHVGSKYEMRRQGAVCELLIHGLEAKDTGEYACLVGGQKTLASLRVKEPEVTIVRGLVDMEVQADEDVEFTCKVSQAGATDVQWHLQGLPLQSNEVTEVAVLADGCTHVLQLKGVTLEDAGTVSFHVGGLSSSAQLTVRVPEVTVLEPLKDVQLSEGQDAHFRCRLSRASGQEARWALGGVPLQCNEMNDITVEQGTLYLLTLHKVTLEDAGTITLQVGSCSSEAQLKVTAKNTVLRGLENVDALEGGEALFECQLSQPEVAAHTWLLDDEPVHTSEKVEVVYFENGLRHLLLLKNLKPQDSCRVTFLAGDVVTSAFLTVRGWRLEVLEPPHDASVKAGMQVRFTCILSEAVPVGEATWYINGAAIQPDDTDWTVTTDGSHHALTLSNAQPQHAGEVTFAARDAVASARLSVLALPDPPEDAEVVGRSDHSVTLSWVAPMSDGGGGLCGYRVEMKEASTGQWQLCHDLVPGPECVVDDLVPGKTYRFRVAAVGPAGAGEPVHLPQMVKIAPAPAPAPAPAPAPAPETRQAVVGEDICLELEVAADGGEVVWHKGTERIQPGGHFEVLSRGQRQMLVIKGFRTEDQGEYRCGPIQGLPSSGAATFNVVMTSGSGDEVPAQPSLPPEAAQEGDLHLLWEALARKRRMSREPTLDSISELPEEDSRVQHLRQEAEETAPDLSEGYSTADELARTGEADLSHTSSDDESRAGTPSLVTYLKKAGGPGISPLASKHEAQVTTSVKPQKQQEPVVPTCPPPGDLSAADLMDPSLDKAAVKIQAAFKGYKVRKEMKQQEGPVFSRTFGDTEAQVGDVLRLECVLATKTDMRACWLKDGIELTDGRHYHIDQLKDGTCSLLVTGLAPTDSGRYTCQVSTKSGRVSHSACVVVSGTESEAESSSGGELDDAFRRAARRLHRLFRTKSPAELSEEELFLSADEGPGEPEEPADWQTYREDENFVCIRFESLAEARQAVTCFRNMFATMGIGVEISLGEQGPRGVEMRIGKVAPTVTPAVPLAKTPGLQTSDAAPVFLTELQNQDVQDGYPMSFDCVVTGQPVPSVRWFKDGKLLEEDDHYMINEDQQGGHQLIITAVVPADMGVYRCLAENSMGVSSTKAELRVELTSTDYDTAADATETSSYFSAQGYLSSREQEGTESDEGQLPQVLEELKDLQVAPGTRLAKFQLKVKGYPAPKLYWFKDGQPLTTSDHIRMTDKKTLHTLEIVSVTREDSGQYAAYISNAVGAAYSSARLLVRGPSEPEEKPASDVHERLVPPRILEKFTPKKVKRGSSITFSVKVEGHPAPSVHWLKEEAEKGVLWIGPDTPGYTMASSSKQHSLVLLDVGRQHQGTYTCIATNPAGQALCSASLHISGLAKEEEQERVKEALISSFLQGTSQAVSAQMSESAGFADLVGQSKGESLVAEEAHSHLSLAEVGTEEFLQKLTSQITEMVSAKISQAKLQVPGGDSDEETKTPSASPRHGRSRPSSSVQESSSESEDGDSRGEIFDIYVVTADYLPLGAEQDAIILREGQYVEVLDSAHPLRWLVRTKPTKSSPSRQGWVSPAYLDKRLKLSPEWGPTEAPEFPGEAVSEDEYRTRLSSVIQELLSSEQAFVGELQFLESHHMKHLERSPRVPAAVASQKTVIFRNVQDISHFHSSFLKELQGCGTDDDVAMCFIKNQEAFEKYLEFLVGRVQAESVVVSTPVQEFYKKYAEETLSAKDPTQPPPPPLQHYLEQPVERVQKYQALLKELIRNKARNRQNCALLEQAYAVVSALPQRAENKLHVSLMENYPGTLEALGEPIRQGHFIVWEGAPGARMPWKGHNRHVFLFRNYLVICKPRRDSRTDTFSYVFRNMMKLSSIDLNDQVEGDDRAFEVWHEREDSVRKYLLQARTVIIKNSWVKEICGIQQRLAQPVWRPPEFEEELADCTAELGETVKLACRVTGTPKPIVSWYKDGKPVEVDPHHILIEDPDGSCTLILDNLTGIDSGQYMCFAASAAGNASTLGKILVQVPPRFVNKVRATPFVEGEDAQITCTVEGAPYPQIRWYKDGTLLAPGNRYRMLNEPRSGVLVLVIQAASKEDLGHYECELVNRLGSTRGGGELYMQSPALRARDQHHREQIVAAVEDTSVEGSAHSAQDGADQQAASVLWRLLGSEALGPSPGDLPNTRQSEPPAFEEAASQIPGAASGTPEVSQPGTHKGLEQETTSSGSQGWTVPIRVEGTAWPGAGTGQLLLDVHSQVIMETTQRTYVCQAPDTGVTRAPSMQVTIEDVQVQVGDMAQFDAVIEGHPPPIVTWYKGSTQLTSSARLSQRQDGTTYSLVLTDVAPHDAGVYTCVANNAGGQVLCKAELLVHGGDKLDAENQVYRRKLHSFYDVQEEIGRGVFGFVKRVQHKGNKMFCAAKFIPLRSKTRAQAYQERDILATLGHPLVTGLLDQFETRKTLILILELCSSEELLDRLFKKGVVTEAEVKVYIQQLVEGLHYLHSHGILHLDIKPPNILMVHPAREDIKICDFGFAQKITPSEPQYSKYGSPEFVSPEIIEQNPVSEGSDIWAMGVISYLSLTCSSPFAGESDRATLLNVLEGRVSWSSPTAAHLSEDAKDFIKATLQRTPRARPSTSQCLAHPWFLKSMPAEEAHFINTKQLKFLLARSRWQRSLMSYKSILVMRSIPELLQGPPDSPSLGVARHLRGEASGASSSSSSSDNELAPFARAKSLPPSPVTHSPLLHPRGFLRPSASLPEETEASMPTADAAVPASPQSAGPPASPGCVPRHSVISSLFYQQAGEGAERGNKTSGAKRHPARRRHLLKGGYIARALPGLREPLMEYSLLEEEAAREEQASLMTKTPSFETALRLPSSSVREVPGRSHSLDNPPVTTGPSPEACKEQLLFPPSTGLTHETTAKDRGHKEGFLQESVPFPPMSGDSRPGKQEGSSQDSCRGKPASSCHSELGSGSQEGCGPPSSQSLGSLPPQSLKKELSTSCGPLFSEQPQAAPFPTQVSPLLGSEKEPQDGSLSEGPVPVPSSSPGSASQVDASLDTEGLSEAGDTCDFTPPPQRPQEQATTRKFSLESRGGYAGVAGYGTFAFGGDAGGMLGQGPLWARMAWAVSQSSEEQDEAATESPQPLESLGPIAEASGVPLRTSPSLTPWEEVEQVSLVQIRDLSGDAEAADTISLDISEVDPAYLNLSDLYDIKYLPFEFMIFRRVPKPIEQPESPGSETEAGQGLADFLEEAAWPWPGELGLRAGLEITEEPEEPGDLEALLGEAAVGRKRKWSPSRGLFQFPGRCLSGEEPVELGLRQRVKASMAHISRILKGRPEGPEREGPPRKKAGLASFRLSGLKGRDQELSDEAVVLGQSVTLACQVLAQPTAQATWSKDGVLLESSGHLLISSTLKNFQLLTILVVKEEDLGTYTCCVSNPLGTAVTTGVLRKAERPSSSPRPEVGELYKDAVLLVWKPVESCGPVTYIVQCCIEGGSWTTLASDISDCCYLTGKLSRGGMYIFRTACVSKAGMGPYSSPSEQVLLGGPNHLASEEESSRGRPAQLLPSTKTFAFQMQIRRGRFSVVRQCREKASGRALAAKIVPYQPEDKTAVLREYEALKRLHHPHLAQLHAAYLSPRHLVLILELCSGPELLPSLAERESYSESDVKDYLWQMLSATQYLHAQHILHLDLRSENMMVTEYNLLKVIDLGNAQSLDQEKVPAPENFKDYLETMAPELLEGQGAVPQTDIWAIGVTAFIMLSGEYPESSEGTRDLQKGLRKGLIRLSRCYAGLSGGAVAFLQSSLCAQPWGRPCASTCLQCGWLTEEGPTGSRPTPVTFPTVRLRAFVREREKRRALLYKKHNLAQVR.

4 Ig-like domains span residues 9–99, 109–201, 234–320, and 329–415; these read PRFL…LRVD, PHFL…LVVD, PPSP…QTYS, and PTVP…AELS. Cys30 and Cys81 are joined by a disulfide. Positions 135-165 are disordered; sequence SPQPAVSWSKDGRRLGPPDAPHVRVEEHGES. Basic and acidic residues predominate over residues 144 to 164; sequence KDGRRLGPPDAPHVRVEEHGE. Cystine bridges form between Cys257/Cys309 and Cys352/Cys402. Residue Ser393 is modified to Phosphoserine. The 98-residue stretch at 513 to 610 folds into the Fibronectin type-III 1 domain; sequence PPADPVVKAK…FPGTMHLVPM (98 aa). 43 consecutive Ig-like domains span residues 702-793, 859-951, 951-1043, 1043-1135, 1135-1227, 1227-1319, 1319-1407, 1411-1503, 1503-1595, 1595-1687, 1687-1779, 1779-1871, 1871-1963, 1963-2051, 2055-2147, 2152-2241, 2242-2325, 2329-2415, 2420-2504, 2598-2681, 2721-2812, 2900-2984, 3078-3162, 3258-3342, 3348-3431, 3527-3610, 3616-3700, 3785-3876, 3881-3964, 4042-4125, 4130-4213, 4219-4301, 4307-4389, 4395-4477, 4483-4565, 4571-4653, 4659-4741, 4746-4829, 4833-4916, 4923-5007, 5013-5105, 5378-5464, and 5557-5659; these read PSSK…QDIT, PKLV…VAEP, PKMV…VTEP, PKLV…VTEP, PKLV…FRLD, PKLA…VAEP, PKLM…VAEP, TRLM…VAEA, PERP…EEVA, AKFS…ARLT, PRVV…AALR, PVLF…AKLN, PVSF…ASLR, PVTL…QSIT, PVVL…AEVT, PVVF…SKVS, PVDI…AKLC, NRFT…ARLL, PSIF…SSIV, PVRF…ATLT, ATLT…ATLT, PAKF…ATLT, PTKF…ATLS, PSRF…ATLS, PRFI…ATLN, PRFI…AVLT, PKFT…ATLS, PRFI…ATLS, PAKF…ATLS, PQVV…TSAT, PVRF…ARLS, PKFK…PEVT, LEVL…ARLS, and PQMV…TFNV. Intrachain disulfides connect Cys885–Cys935, Cys977–Cys1027, Cys1069–Cys1119, Cys1161–Cys1211, Cys1253–Cys1303, Cys1345–Cys1395, Cys1437–Cys1487, Cys1529–Cys1579, Cys1621–Cys1671, Cys1713–Cys1763, Cys1805–Cys1855, Cys1897–Cys1947, Cys1989–Cys2039, and Cys2081–Cys2131. Cys2263 and Cys2313 are oxidised to a cystine. 8 cysteine pairs are disulfide-bonded: Cys2620-Cys2669, Cys2743-Cys2793, Cys2922-Cys2972, Cys3100-Cys3150, Cys3280-Cys3330, Cys3369-Cys3419, Cys3549-Cys3599, and Cys3638-Cys3688. Ser3321 is subject to Phosphoserine. Ser3802 carries the post-translational modification Phosphoserine. 14 disulfide bridges follow: Cys3815/Cys3864, Cys3903/Cys3952, Cys4064/Cys4113, Cys4152/Cys4201, Cys4240/Cys4289, Cys4328/Cys4377, Cys4416/Cys4465, Cys4504/Cys4553, Cys4592/Cys4641, Cys4680/Cys4729, Cys4768/Cys4817, Cys4856/Cys4906, Cys4945/Cys4995, and Cys5034/Cys5086. Ser4960 carries the post-translational modification Phosphoserine. Residues 5471-5569 enclose the Fibronectin type-III 2 domain; sequence PPEDAEVVGR…VKIAPAPAPA (99 aa). Cys5590 and Cys5643 are disulfide-bonded. Ser5699 is subject to Phosphoserine. Positions 5700–5736 are disordered; sequence REPTLDSISELPEEDSRVQHLRQEAEETAPDLSEGYS. The residue at position 5703 (Thr5703) is a Phosphothreonine. Ser5706 bears the Phosphoserine mark. The span at 5713-5724 shows a compositional bias: basic and acidic residues; it reads EDSRVQHLRQEA. At Thr5737 the chain carries Phosphothreonine. Position 5754 is a phosphoserine (Ser5754). In terms of domain architecture, IQ spans 5821 to 5850; that stretch reads LDKAAVKIQAAFKGYKVRKEMKQQEGPVFS. The Ig-like 48 domain occupies 5847-5930; sequence PVFSRTFGDT…QVSTKSGRVS (84 aa). A disulfide bridge links Cys5868 with Cys5920. Residues 5977–5996 are disordered; the sequence is EEELFLSADEGPGEPEEPAD. 3 consecutive Ig-like domains span residues 6077-6166, 6209-6298, and 6320-6416; these read PVFL…AELR, PQVL…ARLL, and PRIL…LHIS. A disulfide bridge connects residues Cys6098 and Cys6150. Positions 6504–6546 are disordered; it reads KLQVPGGDSDEETKTPSASPRHGRSRPSSSVQESSSESEDGDS. Residue Ser6512 is modified to Phosphoserine. The residue at position 6518 (Thr6518) is a Phosphothreonine. Over residues 6519–6538 the composition is skewed to low complexity; it reads PSASPRHGRSRPSSSVQESS. 2 positions are modified to phosphoserine: Ser6520 and Ser6522. The region spanning 6549–6616 is the SH3 domain; sequence EIFDIYVVTA…SPAYLDKRLK (68 aa). The 185-residue stretch at 6642–6826 folds into the DH domain; sequence RLSSVIQELL…SALPQRAENK (185 aa). The 110-residue stretch at 6844–6953 folds into the PH domain; it reads EPIRQGHFIV…WVKEICGIQQ (110 aa). Arg6924 provides a ligand contact to a 1,2-diacyl-sn-glycero-3-phospho-(1D-myo-inositol-4,5-bisphosphate). Arg6929 serves as a coordination point for a 1,2-diacyl-sn-glycero-3-phospho-(1D-myo-inositol-3,4-bisphosphate). Ig-like domains are found at residues 6963 to 7046 and 7057 to 7147; these read PEFE…GNAS and PRFV…GELY. 2 disulfides stabilise this stretch: Cys6984–Cys7036 and Cys7078–Cys7131. A disordered region spans residues 7200 to 7257; it reads ALGPSPGDLPNTRQSEPPAFEEAASQIPGAASGTPEVSQPGTHKGLEQETTSSGSQGW. Residues 7247–7257 show a composition bias toward polar residues; it reads QETTSSGSQGW. An Ig-like 54 domain is found at 7306–7394; that stretch reads PSMQVTIEDV…GQVLCKAELL (89 aa). Positions 7416–7669 constitute a Protein kinase 1 domain; sequence YDVQEEIGRG…TSQCLAHPWF (254 aa). ATP-binding positions include 7422–7430 and Lys7445; that span reads IGRGVFGFV. The active-site Proton acceptor is the Asp7535. 3 disordered regions span residues 7717 to 7810, 7879 to 8106, and 8150 to 8180; these read GPPD…SPGC, EQAS…TTRK, and SSEEQDEAATESPQPLESLGPIAEASGVPLR. The residue at position 7779 (Ser7779) is a Phosphoserine. The span at 7793-7804 shows a compositional bias: low complexity; it reads AAVPASPQSAGP. Over residues 7941 to 7952 the composition is skewed to basic and acidic residues; it reads TTAKDRGHKEGF. Residues 7986–7996 show a composition bias toward polar residues; it reads SCHSELGSGSQ. Composition is skewed to low complexity over residues 8000 to 8014 and 8053 to 8073; these read GPPSSQSLGSLPPQS and GSLSEGPVPVPSSSPGSASQV. Ser8161 is modified (phosphoserine). In terms of domain architecture, Ig-like 55 spans 8380-8464; sequence KGRDQELSDE…VSNPLGTAVT (85 aa). The cysteines at positions 8401 and 8453 are disulfide-linked. The 93-residue stretch at 8474–8566 folds into the Fibronectin type-III 3 domain; the sequence is PSSSPRPEVG…PSEQVLLGGP (93 aa). A Protein kinase 2 domain is found at 8590–8842; that stretch reads FAFQMQIRRG…ASTCLQCGWL (253 aa). ATP-binding positions include 8596-8604 and Lys8619; that span reads IRRGRFSVV. Asp8709 (proton acceptor) is an active-site residue.

This sequence belongs to the protein kinase superfamily. CAMK Ser/Thr protein kinase family. As to quaternary structure, interacts (via protein kinase domain 1) with CDH2 and (via protein kinase domain 1) with ATP1B1. Isoform 2 is found in a complex with DSG2, DESM, GJA1, CDH2 and VCL. Isoform 3 is found in a complex with DSG2, DESM, GJA1, CDH2, ANK3 and VCL. It depends on Mg(2+) as a cofactor. Post-translationally, autophosphorylated by protein kinase domain 1 and 2. In terms of processing, two small isoforms, one probably containing protein kinase domain 2 and a partial protein kinase domain 1 and one containing only protein kinase domain 2, are glycosylated. As to expression, expressed in skeletal muscles including flexor digitorum brevis (FDB), soleus and tibialis anterior muscles, and to a lesser extent in heart muscles (at protein level). Isoform 2 and isoform 3 are expressed in the myocardium (at protein level).

The protein resides in the cytoplasm. The protein localises to the myofibril. Its subcellular location is the sarcomere. It is found in the m line. It localises to the z line. The protein resides in the cell membrane. The protein localises to the sarcolemma. Its subcellular location is the nucleus. It is found in the secreted. It carries out the reaction L-seryl-[protein] + ATP = O-phospho-L-seryl-[protein] + ADP + H(+). The catalysed reaction is L-threonyl-[protein] + ATP = O-phospho-L-threonyl-[protein] + ADP + H(+). Structural component of striated muscles which plays a role in myofibrillogenesis. Probably involved in the assembly of myosin into sarcomeric A bands in striated muscle. Has serine/threonine protein kinase activity and phosphorylates N-cadherin CDH2 and sodium/potassium-transporting ATPase subunit ATP1B1. Binds (via the PH domain) strongly to phosphatidylinositol 3,4-bisphosphate (PtdIns(3,4)P2) and phosphatidylinositol 4,5-bisphosphate (PtdIns(4,5)P2), and to a lesser extent to phosphatidylinositol 3-phosphate (PtdIns(3)P), phosphatidylinositol 4-phosphate (PtdIns(4)P), phosphatidylinositol 5-phosphate (PtdIns(5)P) and phosphatidylinositol 3,4,5-trisphosphate (PtdIns(3,4,5)P3). Its function is as follows. Isoform 2 and isoform 3: bind phosphatidylinositol bisphosphates (PIP2s) via their PH domains and negatively regulate the PI3K/AKT/mTOR signaling pathway, thus contributing to the regulation of cardiomyocyte size and adhesion. This chain is Obscurin, found in Mus musculus (Mouse).